A 161-amino-acid polypeptide reads, in one-letter code: MTDTTAASAEAAAPPQLGILTQYIKDLSFENPNAPASLSQQGKQPDITIQINVGATNLGGTDFEVMLAIEGKAMAEDKVLFALELAYAGVFRIENVPQDSLHPFVMIECPRLLFPFAREIVASATRNGGFPPLMLDPVDFVGLYRQNMARQAEQQQQSKPN.

Belongs to the SecB family. Homotetramer, a dimer of dimers. One homotetramer interacts with 1 SecA dimer.

It is found in the cytoplasm. In terms of biological role, one of the proteins required for the normal export of preproteins out of the cell cytoplasm. It is a molecular chaperone that binds to a subset of precursor proteins, maintaining them in a translocation-competent state. It also specifically binds to its receptor SecA. In Afipia carboxidovorans (strain ATCC 49405 / DSM 1227 / KCTC 32145 / OM5) (Oligotropha carboxidovorans), this protein is Protein-export protein SecB.